We begin with the raw amino-acid sequence, 346 residues long: Fe(3+) ions import ATP-binding protein FbpC 3 (346 aa).

The ABC transporter domain maps to Leu-5–Ile-235. Gly-37 to Thr-44 is an ATP binding site.

This sequence belongs to the ABC transporter superfamily. Fe(3+) ion importer (TC 3.A.1.10) family. As to quaternary structure, the complex is composed of two ATP-binding proteins (FbpC), two transmembrane proteins (FbpB) and a solute-binding protein (FbpA).

The protein resides in the cell membrane. It carries out the reaction Fe(3+)(out) + ATP + H2O = Fe(3+)(in) + ADP + phosphate + H(+). Part of the ABC transporter complex FbpABC involved in Fe(3+) ions import. Responsible for energy coupling to the transport system. The sequence is that of Fe(3+) ions import ATP-binding protein FbpC 3 from Rhodococcus jostii (strain RHA1).